The sequence spans 99 residues: Aspartyl/glutamyl-tRNA(Asn/Gln) amidotransferase subunit C (99 aa).

The protein belongs to the GatC family. Heterotrimer of A, B and C subunits.

The catalysed reaction is L-glutamyl-tRNA(Gln) + L-glutamine + ATP + H2O = L-glutaminyl-tRNA(Gln) + L-glutamate + ADP + phosphate + H(+). It catalyses the reaction L-aspartyl-tRNA(Asn) + L-glutamine + ATP + H2O = L-asparaginyl-tRNA(Asn) + L-glutamate + ADP + phosphate + 2 H(+). In terms of biological role, allows the formation of correctly charged Asn-tRNA(Asn) or Gln-tRNA(Gln) through the transamidation of misacylated Asp-tRNA(Asn) or Glu-tRNA(Gln) in organisms which lack either or both of asparaginyl-tRNA or glutaminyl-tRNA synthetases. The reaction takes place in the presence of glutamine and ATP through an activated phospho-Asp-tRNA(Asn) or phospho-Glu-tRNA(Gln). The protein is Aspartyl/glutamyl-tRNA(Asn/Gln) amidotransferase subunit C of Burkholderia cenocepacia (strain ATCC BAA-245 / DSM 16553 / LMG 16656 / NCTC 13227 / J2315 / CF5610) (Burkholderia cepacia (strain J2315)).